The chain runs to 192 residues: MAQLFFRYGAMNSGKTIEILKVAHNYEEQDKSVIILTSGLDNRDGVGYVASRIGLKREATPVFDDTNIFEIVKQTNPDAACVLIDEAQFLKKHHVLELADIVDELKIPVMTFGLKNDFRNELFEGSKYLLLYADKIEEMKTICWFCRKKAIMNLRFHDGQPVYEGEQVQIGGNEAYYPVCRHHYFYPPKLTK.

Residues 9–16 and 85–88 contribute to the ATP site; these read GAMNSGKT and DEAQ. The Proton acceptor role is filled by Glu-86. The Zn(2+) site is built by Cys-143, Cys-146, Cys-180, and His-183.

Belongs to the thymidine kinase family. Homotetramer.

It is found in the cytoplasm. The enzyme catalyses thymidine + ATP = dTMP + ADP + H(+). This chain is Thymidine kinase, found in Lactiplantibacillus plantarum (strain ATCC BAA-793 / NCIMB 8826 / WCFS1) (Lactobacillus plantarum).